The sequence spans 507 residues: Interleukin-17 receptor E-like protein (507 aa).

Residues 1-21 form the signal peptide; sequence MLAGQALAFLGLTWGTFQSLA.

It localises to the secreted. In Homo sapiens (Human), this protein is Interleukin-17 receptor E-like protein.